The primary structure comprises 223 residues: Phosphoribosylformylglycinamidine synthase subunit PurQ (223 aa).

Residues 3–223 enclose the Glutamine amidotransferase type-1 domain; it reads SAVILLPGLN…LFAGALGITA (221 aa). C87 serves as the catalytic Nucleophile. Active-site residues include H197 and E199.

Part of the FGAM synthase complex composed of 1 PurL, 1 PurQ and 2 PurS subunits.

The protein resides in the cytoplasm. The enzyme catalyses N(2)-formyl-N(1)-(5-phospho-beta-D-ribosyl)glycinamide + L-glutamine + ATP + H2O = 2-formamido-N(1)-(5-O-phospho-beta-D-ribosyl)acetamidine + L-glutamate + ADP + phosphate + H(+). It catalyses the reaction L-glutamine + H2O = L-glutamate + NH4(+). It functions in the pathway purine metabolism; IMP biosynthesis via de novo pathway; 5-amino-1-(5-phospho-D-ribosyl)imidazole from N(2)-formyl-N(1)-(5-phospho-D-ribosyl)glycinamide: step 1/2. Functionally, part of the phosphoribosylformylglycinamidine synthase complex involved in the purines biosynthetic pathway. Catalyzes the ATP-dependent conversion of formylglycinamide ribonucleotide (FGAR) and glutamine to yield formylglycinamidine ribonucleotide (FGAM) and glutamate. The FGAM synthase complex is composed of three subunits. PurQ produces an ammonia molecule by converting glutamine to glutamate. PurL transfers the ammonia molecule to FGAR to form FGAM in an ATP-dependent manner. PurS interacts with PurQ and PurL and is thought to assist in the transfer of the ammonia molecule from PurQ to PurL. The chain is Phosphoribosylformylglycinamidine synthase subunit PurQ from Brucella suis biovar 1 (strain 1330).